Reading from the N-terminus, the 248-residue chain is 2,3-bisphosphoglycerate-dependent phosphoglycerate mutase (248 aa).

Substrate-binding positions include 8–15, 21–22, Arg-60, 87–90, Lys-98, 114–115, and 183–184; these read RHGESEWN, TG, ERHY, RR, and GN. The active-site Tele-phosphohistidine intermediate is the His-9. Glu-87 serves as the catalytic Proton donor/acceptor.

Belongs to the phosphoglycerate mutase family. BPG-dependent PGAM subfamily.

It catalyses the reaction (2R)-2-phosphoglycerate = (2R)-3-phosphoglycerate. The protein operates within carbohydrate degradation; glycolysis; pyruvate from D-glyceraldehyde 3-phosphate: step 3/5. In terms of biological role, catalyzes the interconversion of 2-phosphoglycerate and 3-phosphoglycerate. The polypeptide is 2,3-bisphosphoglycerate-dependent phosphoglycerate mutase (Borrelia garinii subsp. bavariensis (strain ATCC BAA-2496 / DSM 23469 / PBi) (Borreliella bavariensis)).